The chain runs to 246 residues: Probable transcriptional regulatory protein CA_C2295 (246 aa).

This sequence belongs to the TACO1 family.

It localises to the cytoplasm. The chain is Probable transcriptional regulatory protein CA_C2295 from Clostridium acetobutylicum (strain ATCC 824 / DSM 792 / JCM 1419 / IAM 19013 / LMG 5710 / NBRC 13948 / NRRL B-527 / VKM B-1787 / 2291 / W).